We begin with the raw amino-acid sequence, 264 residues long: Thymidylate synthase (264 aa).

DUMP is bound at residue Arg-21. His-51 contacts (6R)-5,10-methylene-5,6,7,8-tetrahydrofolate. Residue 126-127 (RR) participates in dUMP binding. The Nucleophile role is filled by Cys-146. Residues 166–169 (RSAD), Asn-177, and 207–209 (HLY) contribute to the dUMP site. Asp-169 contacts (6R)-5,10-methylene-5,6,7,8-tetrahydrofolate. Residue Ala-263 coordinates (6R)-5,10-methylene-5,6,7,8-tetrahydrofolate.

Belongs to the thymidylate synthase family. Bacterial-type ThyA subfamily. In terms of assembly, homodimer.

The protein localises to the cytoplasm. It catalyses the reaction dUMP + (6R)-5,10-methylene-5,6,7,8-tetrahydrofolate = 7,8-dihydrofolate + dTMP. The protein operates within pyrimidine metabolism; dTTP biosynthesis. Catalyzes the reductive methylation of 2'-deoxyuridine-5'-monophosphate (dUMP) to 2'-deoxythymidine-5'-monophosphate (dTMP) while utilizing 5,10-methylenetetrahydrofolate (mTHF) as the methyl donor and reductant in the reaction, yielding dihydrofolate (DHF) as a by-product. This enzymatic reaction provides an intracellular de novo source of dTMP, an essential precursor for DNA biosynthesis. In Cupriavidus necator (strain ATCC 17699 / DSM 428 / KCTC 22496 / NCIMB 10442 / H16 / Stanier 337) (Ralstonia eutropha), this protein is Thymidylate synthase.